Here is a 496-residue protein sequence, read N- to C-terminus: MKFLICALFLAASYVAASAEAEVKVEEGVLVATVDNFKQLIADNEFVLVEFYAPWCGHCKALAPEYAKAAQQLAEKESPIKLAKVDATVEGELAEQYAVRGYPTLKFFRSGSPVEYSGGRQAADIIAWVTKKTGPPAKDLTSVADAEQFLKDNEIAIIGFFKDLESEEAKTFTKVANALDSFVFGVSSNADVIAKYEAKDNGVVLFKPFDDKKSVFEGELNEENLKKFAQVQSLPLIVDFNHESASKIFGGSIKSHLLFFVSREGGHIEKYVDPLKEIAKKYRDDILFVTISSDEEDHTRIFEFFGMNKEEVPTIRLIKLEEDMAKYKPESDDLSAETIEAFLKKFLDGKLKQHLLSQELPEDWDKNPVKVLVSSNFESVALDKSKSVLVEFYAPWCGHCKQLAPIYDQLAEKYKDNEDIVIAKMDSTANELESIKISSFPTIKYFRKEDNKVIDFNLDRTLDDFVKFLDANGEVADSEPVEETEEEEEAPKKDEL.

A signal peptide spans 1-18 (MKFLICALFLAASYVAAS). Thioredoxin domains lie at 19–134 (AEAE…KKTG) and 349–474 (GKLK…ANGE). Catalysis depends on nucleophile residues C56, C59, C397, and C400. Intrachain disulfides connect C56-C59 and C397-C400. The segment at 473–496 (GEVADSEPVEETEEEEEAPKKDEL) is disordered. A compositionally biased stretch (acidic residues) spans 476 to 489 (ADSEPVEETEEEEE). The Prevents secretion from ER motif lies at 493 to 496 (KDEL).

Belongs to the protein disulfide isomerase family. Homodimer. As to expression, expressed in all head and body tissues.

The protein localises to the endoplasmic reticulum lumen. It carries out the reaction Catalyzes the rearrangement of -S-S- bonds in proteins.. Participates in the folding of proteins containing disulfide bonds. In Drosophila melanogaster (Fruit fly), this protein is Protein disulfide-isomerase (Pdi).